Reading from the N-terminus, the 76-residue chain is Large ribosomal subunit protein eL20 (76 aa).

Belongs to the eukaryotic ribosomal protein eL20 family. In terms of assembly, part of the 50S ribosomal subunit. Binds 23S rRNA.

The chain is Large ribosomal subunit protein eL20 from Methanococcus maripaludis (strain C5 / ATCC BAA-1333).